A 424-amino-acid polypeptide reads, in one-letter code: MSDHGDVSLPPQDRVRILSQLGSAVELNEDIPPRRYYRSGVEIIRMASVYSEEGNIEHAFILYNKYITLFIEKLPKHRDYKSAIIPEKKDAVKKLKSVAFPKAEELKTELLRRYTKEYEQYKERKKKEEEELARNIAIQQELEKEKQRVAQQKQKQLEQEQFHAFEEMIQRQELEKERLKIVQEFGKVDPGPCGPLLPDLEKPCVDVAPSSPFSPTQTPDCNTGMRPAKPPVVDRSLKPGALSVIENVPTIEGLRHIVVPRNLCSEFLQLASANTAKGIETCGVLCGKLMRNEFTITHVLIPRQNGGPDYCHTENEEEIFFMQDDLGLLTLGWIHTHPTQTAFLSSVDLHTHCSYQMMLPESIAIVCSPKFQETGFFKLTDYGLQEISTCRQKGFHPHGRDPPLFCDCSHVTVKDRIVTITDLR.

The interaction with CHMP3 stretch occupies residues 1 to 127 (MSDHGDVSLP…YEQYKERKKK (127 aa)). Phosphoserine occurs at positions 2 and 48. The tract at residues 227-231 (PAKPP) is interaction with STAM. S243 is modified (phosphoserine). The region spanning 257-388 (IVVPRNLCSE…LTDYGLQEIS (132 aa)) is the MPN domain. Zn(2+)-binding residues include H335, H337, D348, H350, C390, H396, and H398. Positions 335 to 348 (HTHPTQTAFLSSVD) match the JAMM motif motif.

The protein belongs to the peptidase M67C family. In terms of assembly, interacts with STAM. Interacts with SMAD6 and SMAD7. Interacts with CHMP3; the interaction appears to relieve the autoinhibition of CHMP3. Interacts with SMURF2 and RNF11; this interaction promotes ubiquitination. Zn(2+) is required as a cofactor. Post-translationally, phosphorylated after BMP type I receptor activation. Ubiquitinated by SMURF2 in the presence of RNF11. Expressed in brain.

Its subcellular location is the nucleus. It is found in the membrane. It localises to the cytoplasm. The protein resides in the early endosome. Inhibited by N-ethylmaleimide. Functionally, zinc metalloprotease that specifically cleaves 'Lys-63'-linked polyubiquitin chains. Does not cleave 'Lys-48'-linked polyubiquitin chains. Plays a role in signal transduction for cell growth and MYC induction mediated by IL-2 and GM-CSF. Potentiates BMP (bone morphogenetic protein) signaling by antagonizing the inhibitory action of SMAD6 and SMAD7. Has a key role in regulation of cell surface receptor-mediated endocytosis and ubiquitin-dependent sorting of receptors to lysosomes. Endosomal localization of STAMBP is required for efficient EGFR degradation but not for its internalization. Involved in the negative regulation of PI3K-AKT-mTOR and RAS-MAP signaling pathways. The polypeptide is STAM-binding protein (Stambp) (Mus musculus (Mouse)).